Here is a 183-residue protein sequence, read N- to C-terminus: Large ribosomal subunit protein uL5 (183 aa).

The protein belongs to the universal ribosomal protein uL5 family. In terms of assembly, part of the 50S ribosomal subunit; part of the 5S rRNA/L5/L18/L25 subcomplex. Contacts the 5S rRNA and the P site tRNA. Forms a bridge to the 30S subunit in the 70S ribosome.

Its function is as follows. This is one of the proteins that bind and probably mediate the attachment of the 5S RNA into the large ribosomal subunit, where it forms part of the central protuberance. In the 70S ribosome it contacts protein S13 of the 30S subunit (bridge B1b), connecting the 2 subunits; this bridge is implicated in subunit movement. Contacts the P site tRNA; the 5S rRNA and some of its associated proteins might help stabilize positioning of ribosome-bound tRNAs. The protein is Large ribosomal subunit protein uL5 of Kosmotoga olearia (strain ATCC BAA-1733 / DSM 21960 / TBF 19.5.1).